We begin with the raw amino-acid sequence, 59 residues long: Large ribosomal subunit protein uL30 (59 aa).

It belongs to the universal ribosomal protein uL30 family. Part of the 50S ribosomal subunit.

The chain is Large ribosomal subunit protein uL30 from Psychrobacter arcticus (strain DSM 17307 / VKM B-2377 / 273-4).